The sequence spans 130 residues: Small ribosomal subunit protein uS8 (130 aa).

The protein belongs to the universal ribosomal protein uS8 family. Part of the 30S ribosomal subunit.

One of the primary rRNA binding proteins, it binds directly to 16S rRNA central domain where it helps coordinate assembly of the platform of the 30S subunit. The chain is Small ribosomal subunit protein uS8 from Haloquadratum walsbyi (strain DSM 16790 / HBSQ001).